The sequence spans 448 residues: Solute carrier family 52, riboflavin transporter, member 2 (448 aa).

The next 5 membrane-spanning stretches (helical) occupy residues 14-34, 47-67, 79-99, 105-125, and 147-167; these read LLVA…WVEL, LPSY…VVTL, VPIQ…APLW, VAGQ…ALAC, and FFLG…VQGV. Asn178 carries N-linked (GlcNAc...) asparagine glycosylation. The helical transmembrane segment at 198–218 threads the bilayer; that stretch reads WALTALLVTSAAAFQGLLLLL. The segment at 228-267 is disordered; that stretch reads GAGPELPLGSPGAEEEEKEEEEALPLQEPPSQAAGTIPGP. A compositionally biased stretch (acidic residues) spans 240–250; that stretch reads AEEEEKEEEEA. The next 5 helical transmembrane spans lie at 280–300, 315–335, 342–362, 369–389, and 407–427; these read AFLL…LPAV, LAVV…MGVL, LVGL…LAIL, VGTT…LCVF, and ALLA…GTMF.

This sequence belongs to the riboflavin transporter family.

It is found in the cell membrane. It carries out the reaction riboflavin(in) = riboflavin(out). Its activity is regulated as follows. Riboflavin transport is Na(+)-independent but moderately pH-sensitive. Activity is strongly inhibited by riboflavin analogs, such as lumiflavin. Weakly inhibited by flavin adenine dinucleotide (FAD) and flavin mononucleotide (FMN). Functionally, plasma membrane transporter mediating the uptake by cells of the water soluble vitamin B2/riboflavin that plays a key role in biochemical oxidation-reduction reactions of the carbohydrate, lipid, and amino acid metabolism. May also act as a receptor for 4-hydroxybutyrate. In terms of biological role, (Microbial infection) In case of infection by retroviruses, acts as a cell receptor to retroviral envelopes similar to the porcine endogenous retrovirus (PERV-A). The sequence is that of Solute carrier family 52, riboflavin transporter, member 2 (SLC52A2) from Papio hamadryas (Hamadryas baboon).